The sequence spans 384 residues: Alcohol dehydrogenase class-3 (384 aa).

7 residues coordinate Zn(2+): Cys-48, His-70, Cys-100, Cys-103, Cys-106, Cys-114, and Cys-177.

This sequence belongs to the zinc-containing alcohol dehydrogenase family. Class-III subfamily. As to quaternary structure, homodimer. Requires Zn(2+) as cofactor.

The protein localises to the cytoplasm. The enzyme catalyses a primary alcohol + NAD(+) = an aldehyde + NADH + H(+). The catalysed reaction is a secondary alcohol + NAD(+) = a ketone + NADH + H(+). It catalyses the reaction S-(hydroxymethyl)glutathione + NADP(+) = S-formylglutathione + NADPH + H(+). It carries out the reaction S-(hydroxymethyl)glutathione + NAD(+) = S-formylglutathione + NADH + H(+). Functionally, class-III ADH is remarkably ineffective in oxidizing ethanol, but it readily catalyzes the oxidation of long-chain primary alcohols and the oxidation of S-(hydroxymethyl) glutathione. Plays a role in the calcium flux to the cytoplasm in the ASJ sensory neurons upon removal of a nitric oxide stimulus. The sequence is that of Alcohol dehydrogenase class-3 from Caenorhabditis elegans.